The chain runs to 442 residues: NAD(P)H sulfur oxidoreductase (CoA-dependent) (442 aa).

13 to 14 (AA) serves as a coordination point for FAD. CoA is bound at residue R24. Residues 35–36 (EA) and 42–44 (HAP) each bind FAD. CoA contacts are provided by residues 41 to 45 (SHAPC), 62 to 63 (HY), and R72. The active-site Redox-active is the C45. The FAD site is built by V82, D280, and A298. CoA-binding residues include N302 and K358. Y422 is an FAD binding site. W430 and R438 together coordinate CoA.

The protein belongs to the class-III pyridine nucleotide-disulfide oxidoreductase family. Homodimer. The cofactor is FAD.

It is found in the cytoplasm. It carries out the reaction hydrogen sulfide + NADP(+) = sulfur + NADPH. The catalysed reaction is hydrogen sulfide + NAD(+) = sulfur + NADH. The enzyme catalyses NADP(+) + 2 CoA = CoA-disulfide + NADPH + H(+). It catalyses the reaction NAD(+) + 2 CoA = CoA-disulfide + NADH + H(+). Functionally, catalyzes the CoA-dependent reduction of elemental sulfur (S(0)) to produce hydrogen sulfide. Can use both NADPH and NADH, but shows a preference for NADPH. May enable S(0) to be used, via sulfide, for iron-sulfur cluster synthesis by SipA. Also shows coenzyme A disulfide reductase (CoADR) activity with both NADH and NADPH. However, CoADR specific activity is about 20-fold lower than the sulfur reduction assay and CoADR activity appears to be an artifactual side reaction and is not thought to have any physiological relevance. Also shows NAD(P)H oxidase activity with both NADH and NADPH. This chain is NAD(P)H sulfur oxidoreductase (CoA-dependent), found in Pyrococcus furiosus (strain ATCC 43587 / DSM 3638 / JCM 8422 / Vc1).